The chain runs to 912 residues: Transferrin-binding protein A (912 aa).

The signal sequence occupies residues 1–23 (MTKKPYFRLSIISCLLISCYVKA). The TonB box motif lies at 50 to 57 (ETISVTAE). Positions 63–188 (KDNEVTGLGK…LAGSVTFQSK (126 aa)) constitute a TBDR plug domain. Positions 199–912 (SWGIQTKNAY…NYTLTLEMKF (714 aa)) constitute a TBDR beta-barrel domain. The short motif at 895–912 (TRYAASGRNYTLTLEMKF) is the TonB C-terminal box element.

Belongs to the TonB-dependent receptor family.

The protein resides in the cell outer membrane. In terms of biological role, haemophilus acquires iron by extracting it from serum transferrin (TF) in its human host. Acts as a transferrin receptor and is required for transferrin utilization. The polypeptide is Transferrin-binding protein A (Haemophilus influenzae (strain ATCC 51907 / DSM 11121 / KW20 / Rd)).